The primary structure comprises 365 residues: MSTAVTITAPSVKHILLDSLVVMKIVKHVDSELHAGISEVSGDACAGVLTGLVFLEDSRLEITNCFPTVRNEPVIDDDANAAQQYEEQKQQEMLDMLRKFRTMNIDYEIVGFYQSHQFGAGFSHDLVESMFDYQAMGPENVVLIYDPIKTRQGQLSIRAWRLSTAALDLASKNDWRPELVKSAGLTYQNMFEELPIIIKSSYLNNVLMSELALSKSYSSDKYSTRHFDLGSKKSLEKSVRAMMANVDELNKSIQSLTKYTIDKQRHDNMVFSLTQKRQQENESRLARGDPPLPMDDIKRIKAPQLQTRNGLLDELLASFDTNALADFSKTVTSENITKLFIAEAVAEEKVVGTKDRTLSSVSSTR.

An MPN domain is found at 15-166 (ILLDSLVVMK…IRAWRLSTAA (152 aa)). Residues 276 to 295 (KRQQENESRLARGDPPLPMD) form a disordered region. Positions 277–287 (RQQENESRLAR) are enriched in basic and acidic residues.

The protein belongs to the eIF-3 subunit H family. Component of the eukaryotic translation initiation factor 3 (eIF-3) complex.

The protein resides in the cytoplasm. Functionally, component of the eukaryotic translation initiation factor 3 (eIF-3) complex, which is involved in protein synthesis of a specialized repertoire of mRNAs and, together with other initiation factors, stimulates binding of mRNA and methionyl-tRNAi to the 40S ribosome. The eIF-3 complex specifically targets and initiates translation of a subset of mRNAs involved in cell proliferation. The chain is Eukaryotic translation initiation factor 3 subunit H from Caenorhabditis briggsae.